Reading from the N-terminus, the 80-residue chain is Small ribosomal subunit protein bS18 (80 aa).

The protein belongs to the bacterial ribosomal protein bS18 family. In terms of assembly, part of the 30S ribosomal subunit. Forms a tight heterodimer with protein bS6.

In terms of biological role, binds as a heterodimer with protein bS6 to the central domain of the 16S rRNA, where it helps stabilize the platform of the 30S subunit. In Staphylococcus aureus (strain Mu3 / ATCC 700698), this protein is Small ribosomal subunit protein bS18.